The primary structure comprises 203 residues: Hydra actinoporin-like toxin 2 (203 aa).

Residues 1 to 21 (MLSYLCFGCFLVSASLEIACG) form the signal peptide. The Cell attachment site signature appears at 175–177 (RGG).

It belongs to the actinoporin family. HALT subfamily. Octamer or nonamer in membranes. Monomer in the soluble state. In vitro, interacts with folate receptor alpha (of target organism). In terms of tissue distribution, strongly expressed in the gland and mucous cells in the endoderm.

It localises to the nematocyst. The protein resides in the secreted. It is found in the target cell membrane. Its function is as follows. Pore-forming protein that forms hydrophilic pores and causes cytolysis. Compared to equinatoxin-2 (AC P61914), it reveals lower cytolysis activity (5-12-fold difference, tested on erythrocytes), a larger pore size (probably 2-3 nm) and different affinity to membrane lipids (100-fold lower affinity to sphingomyelin). Binds to sulfatides (SFT). Shows cytolytic activity on HeLa cells, with a different potency than its paralogs (from most potent to less potent: HALT-4&gt;HALT-6~HALT-1&gt;HALT-3&gt;HALT-7&gt;HALT-2). Pore formation is a multi-step process that involves specific recognition of membrane lipid by a protein aromatic residues rich region, firm binding to the membrane (mainly driven by hydrophobic interactions) accompanied by the transfer of the N-terminal region to the lipid-water interface and finally pore formation after oligomerization of monomers. In vitro, binds to the folate receptor alpha (FOLR1), a GPI-anchored membrane protein that plays a major role in the uptake of folate/folic acid into cells via endocytosis, suggesting a possible involvement of this receptor in the mechanism of HALT-1-induced cell lysis. In vivo, does not cause visible paralysis in larvae of the blowfly Sarcophaga faculata, the most common arthropod prey of Hydra. This is Hydra actinoporin-like toxin 2 from Hydra vulgaris (Hydra).